Here is a 350-residue protein sequence, read N- to C-terminus: fMet-Leu-Phe receptor (350 aa).

Residues 1 to 27 (METNSSLPTNISGGTPAVSAGYLFLDI) lie on the Extracellular side of the membrane. Residues N4 and N10 are each glycosylated (N-linked (GlcNAc...) asparagine). The chain crosses the membrane as a helical span at residues 28–50 (ITYLVFAVTFVLGVLGNGLVIWV). Residues 51 to 61 (AGFRMTHTVTT) lie on the Cytoplasmic side of the membrane. A helical transmembrane segment spans residues 62 to 83 (ISYLNLAVADFCFTSTLPFFMV). Residues 84 to 100 (RKAMGGHWPFGWFLCKF) lie on the Extracellular side of the membrane. A disulfide bond links C98 and C176. A helical membrane pass occupies residues 101 to 121 (VFTIVDINLFGSVFLIALIAL). The Cytoplasmic segment spans residues 122-140 (DRCVCVLHPVWTQNHRTVS). The chain crosses the membrane as a helical span at residues 141–162 (LAKKVIIGPWVMALLLTLPVII). At 163–205 (RVTTVPGKTGTVACTFNFSPWTNDPKERINVAVAMLTVRGIIR) the chain is on the extracellular side. A helical membrane pass occupies residues 206-226 (FIIGFSAPMSIVAVSYGLIAT). Topologically, residues 227-242 (KIHKQGLIKSSRPLRV) are cytoplasmic. A helical membrane pass occupies residues 243-266 (LSFVAAAFFLCWSPYQVVALIATV). Over 267-285 (RIRELLQGMYKEIGIAVDV) the chain is Extracellular. Residues 286 to 305 (TSALAFFNSCLNPMLYVFMG) traverse the membrane as a helical segment. At 306 to 350 (QDFRERLIHALPASLERALTEDSTQTSDTATNSTLPSAEVELQAK) the chain is on the cytoplasmic side. The disordered stretch occupies residues 325-350 (TEDSTQTSDTATNSTLPSAEVELQAK). Residues 326-341 (EDSTQTSDTATNSTLP) are compositionally biased toward polar residues. Position 328 is a phosphoserine (S328). Residues T329 and T331 each carry the phosphothreonine modification. The residue at position 332 (S332) is a Phosphoserine. A phosphothreonine mark is found at T334 and T336. S338 carries the post-translational modification Phosphoserine. At T339 the chain carries Phosphothreonine.

This sequence belongs to the G-protein coupled receptor 1 family. As to quaternary structure, interacts with S.aureus chemotaxis inhibitory protein (CHIPS); the interaction blocks the receptor and may thus inhibit the immune response. In terms of processing, phosphorylated; which is necessary for desensitization. In terms of tissue distribution, neutrophils.

Its subcellular location is the cell membrane. High affinity receptor for N-formyl-methionyl peptides (fMLP), which are powerful neutrophil chemotactic factors. Binding of fMLP to the receptor stimulates intracellular calcium mobilization and superoxide anion release. This response is mediated via a G-protein that activates a phosphatidylinositol-calcium second messenger system. Receptor for TAFA4, mediates its effects on chemoattracting macrophages, promoting phagocytosis and increasing ROS release. Receptor for cathepsin CTSG, leading to increased phagocyte chemotaxis. The chain is fMet-Leu-Phe receptor (FPR1) from Homo sapiens (Human).